The sequence spans 284 residues: Tropomyosin (284 aa).

The interval 1-54 is disordered; it reads MDAIKKKMQAMKLEKDNAMDRADTLEQQNKEANNRAEKTEEEIRATQKKMQQVE. Residues 1 to 273 are a coiled coil; the sequence is MDAIKKKMQA…KEKYKSITDE (273 aa). Positions 12–45 are enriched in basic and acidic residues; it reads KLEKDNAMDRADTLEQQNKEANNRAEKTEEEIRA.

Belongs to the tropomyosin family. As to quaternary structure, homodimer. In terms of tissue distribution, muscle (at protein level). Expressed in leg and chest protection muscle (at protein level). Expressed in claw muscle.

Its function is as follows. Tropomyosin, in association with the troponin complex, plays a central role in the calcium dependent regulation of muscle contraction. The chain is Tropomyosin from Eriocheir sinensis (Chinese mitten crab).